We begin with the raw amino-acid sequence, 211 residues long: Peptidyl-tRNA hydrolase (211 aa).

Tyr-15 contributes to the tRNA binding site. The active-site Proton acceptor is the His-20. TRNA is bound by residues Phe-66, Asn-68, and Asn-114. Residues 189 to 211 are disordered; sequence TKPPRPKATRPAQAQAAPQAGAD. Over residues 197–211 the composition is skewed to low complexity; the sequence is TRPAQAQAAPQAGAD.

This sequence belongs to the PTH family. Monomer.

The protein localises to the cytoplasm. It carries out the reaction an N-acyl-L-alpha-aminoacyl-tRNA + H2O = an N-acyl-L-amino acid + a tRNA + H(+). Hydrolyzes ribosome-free peptidyl-tRNAs (with 1 or more amino acids incorporated), which drop off the ribosome during protein synthesis, or as a result of ribosome stalling. In terms of biological role, catalyzes the release of premature peptidyl moieties from peptidyl-tRNA molecules trapped in stalled 50S ribosomal subunits, and thus maintains levels of free tRNAs and 50S ribosomes. In Acidovorax ebreus (strain TPSY) (Diaphorobacter sp. (strain TPSY)), this protein is Peptidyl-tRNA hydrolase.